Here is a 38-residue protein sequence, read N- to C-terminus: Phospholipase A2 2 (38 aa).

The Ca(2+) site is built by Tyr28, Gly30, and Gly32.

The protein belongs to the phospholipase A2 family. Group I subfamily. Ca(2+) serves as cofactor. Expressed by the venom gland.

The protein localises to the secreted. The enzyme catalyses a 1,2-diacyl-sn-glycero-3-phosphocholine + H2O = a 1-acyl-sn-glycero-3-phosphocholine + a fatty acid + H(+). Snake venom phospholipase A2 (PLA2) that inhibits neuromuscular transmission by blocking acetylcholine release from the nerve termini. PLA2 catalyzes the calcium-dependent hydrolysis of the 2-acyl groups in 3-sn-phosphoglycerides. The sequence is that of Phospholipase A2 2 from Calliophis bivirgatus (Blue Malaysian coral snake).